Here is a 617-residue protein sequence, read N- to C-terminus: DNA mismatch repair protein MutL (617 aa).

This sequence belongs to the DNA mismatch repair MutL/HexB family.

Its function is as follows. This protein is involved in the repair of mismatches in DNA. It is required for dam-dependent methyl-directed DNA mismatch repair. May act as a 'molecular matchmaker', a protein that promotes the formation of a stable complex between two or more DNA-binding proteins in an ATP-dependent manner without itself being part of a final effector complex. This Bartonella tribocorum (strain CIP 105476 / IBS 506) protein is DNA mismatch repair protein MutL.